The primary structure comprises 291 residues: 4-diphosphocytidyl-2-C-methyl-D-erythritol kinase (291 aa).

Lysine 8 is an active-site residue. 89–99 (PIGAGVGGGSS) serves as a coordination point for ATP. Aspartate 131 is a catalytic residue.

This sequence belongs to the GHMP kinase family. IspE subfamily.

It catalyses the reaction 4-CDP-2-C-methyl-D-erythritol + ATP = 4-CDP-2-C-methyl-D-erythritol 2-phosphate + ADP + H(+). The protein operates within isoprenoid biosynthesis; isopentenyl diphosphate biosynthesis via DXP pathway; isopentenyl diphosphate from 1-deoxy-D-xylulose 5-phosphate: step 3/6. Functionally, catalyzes the phosphorylation of the position 2 hydroxy group of 4-diphosphocytidyl-2C-methyl-D-erythritol. The polypeptide is 4-diphosphocytidyl-2-C-methyl-D-erythritol kinase (Chlamydia caviae (strain ATCC VR-813 / DSM 19441 / 03DC25 / GPIC) (Chlamydophila caviae)).